The following is a 341-amino-acid chain: MDKDLRILAIESSCDETSAAVVVNGRIVLSNIISSQIDIHKKFGGVVPEVASRKHIEVISVVVEQALEEAQITFKDIDAIGVTYGPGLVGALLVGLQYAKALSYALNKPLIGVNHIEGHISANFIQYKDLKPPFVCLVVSGGHTYLVYMKDYGKFEVLGQTRDDAAGEAYDKIARAIGLGYPGGPKVDKIAREGNPDAIKFPRANFHDNKTLDFSFSGLKSSVLNYLNQKSMKKEDINKADVAASFQKAVVSFLVDNSLRACKLKNVNKIAVAGGVASNTCLRETFKSQGSKNKVDVLFPEPILCTDNAAMIGSAAYFEYMRGNTSSLNLNAIPNLKLGER.

Fe cation-binding residues include histidine 115 and histidine 119. Residues 138 to 142, aspartate 171, glycine 184, aspartate 188, and asparagine 279 contribute to the substrate site; that span reads VVSGG. Aspartate 307 is a Fe cation binding site.

It belongs to the KAE1 / TsaD family. Fe(2+) serves as cofactor.

The protein localises to the cytoplasm. The catalysed reaction is L-threonylcarbamoyladenylate + adenosine(37) in tRNA = N(6)-L-threonylcarbamoyladenosine(37) in tRNA + AMP + H(+). In terms of biological role, required for the formation of a threonylcarbamoyl group on adenosine at position 37 (t(6)A37) in tRNAs that read codons beginning with adenine. Is involved in the transfer of the threonylcarbamoyl moiety of threonylcarbamoyl-AMP (TC-AMP) to the N6 group of A37, together with TsaE and TsaB. TsaD likely plays a direct catalytic role in this reaction. This is tRNA N6-adenosine threonylcarbamoyltransferase from Clostridium kluyveri (strain NBRC 12016).